Consider the following 572-residue polypeptide: Mitochondrial chaperone TCM62 (572 aa).

The transit peptide at 1–16 (MLRNCLRKLGNHQTKC) directs the protein to the mitochondrion. Topologically, residues 17 to 471 (SVKTLHTPIY…KANEPNFMTK (455 aa)) are mitochondrial matrix. Residues 472 to 488 (VGINAVLSAVILPSEVA) traverse the membrane as a helical segment. Topologically, residues 489-572 (FKNAYGYNYY…VYKKPERHKA (84 aa)) are mitochondrial intermembrane.

It belongs to the chaperonin (HSP60) family. Forms a high molecular mass protein complex of approximately 850 kDa.

It localises to the mitochondrion inner membrane. In terms of biological role, chaperone. Required for the assembly of succinate dehydrogenase subunits. Ensures mitochondrial gene expression at elevated temperatures and prevents heat-aggregation of the ribosomal subunit VAR1. This chain is Mitochondrial chaperone TCM62 (TCM62), found in Saccharomyces cerevisiae (strain YJM789) (Baker's yeast).